The primary structure comprises 387 residues: 3-ketoacyl-CoA thiolase (387 aa).

Residue Cys-91 is the Acyl-thioester intermediate of the active site. Active-site proton acceptor residues include His-343 and Cys-373.

Belongs to the thiolase-like superfamily. Thiolase family. As to quaternary structure, heterotetramer of two alpha chains (FadB) and two beta chains (FadA).

It is found in the cytoplasm. It catalyses the reaction an acyl-CoA + acetyl-CoA = a 3-oxoacyl-CoA + CoA. It functions in the pathway lipid metabolism; fatty acid beta-oxidation. Functionally, catalyzes the final step of fatty acid oxidation in which acetyl-CoA is released and the CoA ester of a fatty acid two carbons shorter is formed. In Vibrio vulnificus (strain CMCP6), this protein is 3-ketoacyl-CoA thiolase.